The sequence spans 740 residues: Catalase-peroxidase (740 aa).

The span at 1–16 shows a compositional bias: basic and acidic residues; the sequence is MSENHDAIVTDAKTEE. The disordered stretch occupies residues 1–38; the sequence is MSENHDAIVTDAKTEETDGCPVAHGRAPHPTQGGGNRQ. The segment at residues 108 to 231 is a cross-link (tryptophyl-tyrosyl-methioninium (Trp-Tyr) (with M-257)); sequence WHSAGTYRIS…LGAVQMGLIY (124 aa). The active-site Proton acceptor is the H109. The segment at residues 231–257 is a cross-link (tryptophyl-tyrosyl-methioninium (Tyr-Met) (with W-108)); it reads YVNPEGPNGNPDPIAAARDIRETFRRM. A heme b-binding site is contributed by H272.

The protein belongs to the peroxidase family. Peroxidase/catalase subfamily. As to quaternary structure, homodimer. Heme b is required as a cofactor. Formation of the three residue Trp-Tyr-Met cross-link is important for the catalase, but not the peroxidase activity of the enzyme.

The enzyme catalyses H2O2 + AH2 = A + 2 H2O. The catalysed reaction is 2 H2O2 = O2 + 2 H2O. Bifunctional enzyme with both catalase and broad-spectrum peroxidase activity. This Streptomyces coelicolor (strain ATCC BAA-471 / A3(2) / M145) protein is Catalase-peroxidase.